The chain runs to 840 residues: Aconitase AMT8 (840 aa).

Aspartate 258–histidine 260 is a binding site for substrate. [4Fe-4S] cluster-binding residues include cysteine 450, cysteine 513, and cysteine 516. Substrate contacts are provided by residues arginine 536, arginine 541, and serine 709–arginine 710.

It belongs to the aconitase/IPM isomerase family.

It functions in the pathway mycotoxin biosynthesis. Its function is as follows. Aconitase; part of the gene clusters that mediate the biosynthesis of AM-toxins, host-selective toxins (HSTs) causing Alternaria blotch on apple, a worldwide distributed disease. AM-toxins are cyclic depsipeptides containing the 3 residues 2-hydroxy-isovaleric acid (2-HIV), dehydroalanine, L-alanine which are common for all 3 AM-toxins I to III. The fourth precursor is L-alpha-amino-methoxyphenyl-valeric acid (L-Amv) for AM-toxin I, L-alpha-amino-phenyl-valeric acid (L-Apv) for AM-toxin II, and L-alpha-amino-hydroxyphenyl-valeric acid (L-Ahv) for AM-toxin III. AM-toxins have two target sites for affecting susceptible apple cells; they cause invagination of the plasma membrane and electrolyte loss and chloroplast disorganization. The non-ribosomal peptide synthetase AMT1 contains 4 catalytic modules and is responsible for activation of each residue in AM-toxin. The aldo-keto reductase AMT2 catalyzes the conversion of 2-keto-isovaleric acid (2-KIV) to 2-hydroxy-isovaleric acid (2-HIV), one of the precursor residues incorporated by AMT1 during AM-toxin biosynthesis, by reduction of its ketone to an alcohol. The cytochrome P450 monooxygenase AMT3 and the thioesterase AMT4 are also important for AM-toxin production, but their exact function within the AM-toxin biosynthesis are not known yet. Up to 21 proteins (including AMT1 to AMT4) are predicted to be involved in AM-toxin biosynthesis since their expression ishighly up-regulated in AM-toxin-producing cultures. The protein is Aconitase AMT8 of Alternaria alternata (Alternaria rot fungus).